The primary structure comprises 490 residues: tRNA-guanine(15) transglycosylase (490 aa).

Asp-90 acts as the Nucleophile in catalysis. Asp-125 and Ala-193 together coordinate substrate. Zn(2+) contacts are provided by Cys-276, Cys-278, and Cys-281.

The protein belongs to the archaeosine tRNA-ribosyltransferase family. Requires Zn(2+) as cofactor.

It carries out the reaction guanosine(15) in tRNA + 7-cyano-7-deazaguanine = 7-cyano-7-carbaguanosine(15) in tRNA + guanine. It functions in the pathway tRNA modification; archaeosine-tRNA biosynthesis. In terms of biological role, exchanges the guanine residue with 7-cyano-7-deazaguanine (preQ0) at position 15 in the dihydrouridine loop (D-loop) of archaeal tRNAs. The chain is tRNA-guanine(15) transglycosylase from Methanosarcina mazei (strain ATCC BAA-159 / DSM 3647 / Goe1 / Go1 / JCM 11833 / OCM 88) (Methanosarcina frisia).